Reading from the N-terminus, the 343-residue chain is Calcium/calmodulin-dependent protein kinase type 1B (343 aa).

Residues 15–270 (YEIREKLGSG…CQQALQHLWI (256 aa)) enclose the Protein kinase domain. ATP-binding positions include 21 to 29 (LGSGAFSEV) and Lys-44. Asp-136 functions as the Proton acceptor in the catalytic mechanism. The interval 290 to 311 (KNFARTHWKRAFNATSFLRHIR) is calmodulin-binding. The interval 314–343 (GQSPEGEEASRQGMTRHSHPGLGTSQSPKW) is disordered. A Phosphoserine modification is found at Ser-338.

The protein belongs to the protein kinase superfamily. CAMK Ser/Thr protein kinase family. CaMK subfamily. Isoform 1 and isoform 2 are phosphorylated by CAMKK1. In terms of tissue distribution, isoform 1 is expressed in liver, heart, lung, kidney, spleen and testis. Isoform 2 is predominantly expressed in cerebrum and cerebellum.

The protein resides in the cytoplasm. The protein localises to the nucleus. The enzyme catalyses L-seryl-[protein] + ATP = O-phospho-L-seryl-[protein] + ADP + H(+). The catalysed reaction is L-threonyl-[protein] + ATP = O-phospho-L-threonyl-[protein] + ADP + H(+). Activated by Ca(2+)/calmodulin. Must be phosphorylated to be maximally active. Activated by CAMKK1. In terms of biological role, calcium/calmodulin-dependent protein kinase belonging to a proposed calcium-triggered signaling cascade. In vitro, isoform 1 and isoform 2 phosphorylate CREB1, SYN1/synapsin I. Phosphorylates and activates CAMK1. This Rattus norvegicus (Rat) protein is Calcium/calmodulin-dependent protein kinase type 1B (Pnck).